A 140-amino-acid polypeptide reads, in one-letter code: Small ribosomal subunit protein uS12m (140 aa).

The protein belongs to the universal ribosomal protein uS12 family.

It localises to the mitochondrion. This Dictyostelium citrinum (Slime mold) protein is Small ribosomal subunit protein uS12m (mrps12).